We begin with the raw amino-acid sequence, 360 residues long: DNA replication and repair protein RecF (360 aa).

30-37 is a binding site for ATP; sequence GQNGSGKT.

The protein belongs to the RecF family.

It localises to the cytoplasm. Functionally, the RecF protein is involved in DNA metabolism; it is required for DNA replication and normal SOS inducibility. RecF binds preferentially to single-stranded, linear DNA. It also seems to bind ATP. The sequence is that of DNA replication and repair protein RecF from Shewanella sp. (strain MR-4).